The sequence spans 263 residues: Kallikrein 1-related peptidase b27 (263 aa).

The signal sequence occupies residues 1 to 17 (MRFLILFLALSLGGIDA). A propeptide spans 18–24 (APPVQSR) (activation peptide). One can recognise a Peptidase S1 domain in the interval 25-260 (IIGGFKCKKN…FTSWIKDTMA (236 aa)). Disulfide bonds link Cys-31-Cys-175, Cys-50-Cys-66, Cys-154-Cys-221, Cys-186-Cys-200, and Cys-211-Cys-236. The Charge relay system role is filled by His-65. 2 N-linked (GlcNAc...) asparagine glycosylation sites follow: Asn-69 and Asn-105. Asp-122 serves as the catalytic Charge relay system. The Charge relay system role is filled by Ser-215.

It belongs to the peptidase S1 family. Kallikrein subfamily. In terms of tissue distribution, expressed in testis and submaxillary gland. Not expressed in heart, brain, spleen, lung, liver, muscle, kidney and ovary. In the testis, expression localized specifically to Leydig cells in the interstitial tissues.

With respect to regulation, strongly inhibited by protease inhibitors diisopropyl fluorophosphate, phenylmethanesulfonyl fluoride and SBTI. In terms of biological role, serine protease with chymotrypsin-like cleavage specificity. Shows activity towards casein, gelatin, IGFBP3 and fibronectin but not towards laminin or collagens I and IV. Does not hydrolyze kininogin to release Lys-bradykinin. This is Kallikrein 1-related peptidase b27 (Klk1b27) from Mus musculus (Mouse).